The primary structure comprises 263 residues: Acetylglutamate kinase (263 aa).

Residues 48 to 49 (GG), Arg70, and Asn162 contribute to the substrate site.

It belongs to the acetylglutamate kinase family. ArgB subfamily.

The protein localises to the cytoplasm. It catalyses the reaction N-acetyl-L-glutamate + ATP = N-acetyl-L-glutamyl 5-phosphate + ADP. The protein operates within amino-acid biosynthesis; L-arginine biosynthesis; N(2)-acetyl-L-ornithine from L-glutamate: step 2/4. Functionally, catalyzes the ATP-dependent phosphorylation of N-acetyl-L-glutamate. This is Acetylglutamate kinase from Shewanella sediminis (strain HAW-EB3).